The chain runs to 418 residues: Gamma-glutamyl phosphate reductase (418 aa).

It belongs to the gamma-glutamyl phosphate reductase family.

The protein localises to the cytoplasm. It catalyses the reaction L-glutamate 5-semialdehyde + phosphate + NADP(+) = L-glutamyl 5-phosphate + NADPH + H(+). It participates in amino-acid biosynthesis; L-proline biosynthesis; L-glutamate 5-semialdehyde from L-glutamate: step 2/2. Catalyzes the NADPH-dependent reduction of L-glutamate 5-phosphate into L-glutamate 5-semialdehyde and phosphate. The product spontaneously undergoes cyclization to form 1-pyrroline-5-carboxylate. The chain is Gamma-glutamyl phosphate reductase from Moorella thermoacetica (strain ATCC 39073 / JCM 9320).